Reading from the N-terminus, the 126-residue chain is Hydrogenase maturation factor HypA (126 aa).

Ni(2+) is bound at residue His2. Zn(2+) contacts are provided by Cys78, Cys81, Cys97, and Cys100.

It belongs to the HypA/HybF family.

Involved in the maturation of [NiFe] hydrogenases. Required for nickel insertion into the metal center of the hydrogenase. The protein is Hydrogenase maturation factor HypA of Methanococcus maripaludis (strain C5 / ATCC BAA-1333).